The chain runs to 318 residues: Nucleotide-binding protein Lcho_3490 (318 aa).

35 to 42 (GISGGGKS) provides a ligand contact to ATP. 84–87 (DVRN) contacts GTP.

It belongs to the RapZ-like family.

Its function is as follows. Displays ATPase and GTPase activities. This Leptothrix cholodnii (strain ATCC 51168 / LMG 8142 / SP-6) (Leptothrix discophora (strain SP-6)) protein is Nucleotide-binding protein Lcho_3490.